We begin with the raw amino-acid sequence, 162 residues long: SsrA-binding protein (162 aa).

This sequence belongs to the SmpB family.

It localises to the cytoplasm. Its function is as follows. Required for rescue of stalled ribosomes mediated by trans-translation. Binds to transfer-messenger RNA (tmRNA), required for stable association of tmRNA with ribosomes. tmRNA and SmpB together mimic tRNA shape, replacing the anticodon stem-loop with SmpB. tmRNA is encoded by the ssrA gene; the 2 termini fold to resemble tRNA(Ala) and it encodes a 'tag peptide', a short internal open reading frame. During trans-translation Ala-aminoacylated tmRNA acts like a tRNA, entering the A-site of stalled ribosomes, displacing the stalled mRNA. The ribosome then switches to translate the ORF on the tmRNA; the nascent peptide is terminated with the 'tag peptide' encoded by the tmRNA and targeted for degradation. The ribosome is freed to recommence translation, which seems to be the essential function of trans-translation. This is SsrA-binding protein from Granulibacter bethesdensis (strain ATCC BAA-1260 / CGDNIH1).